The following is a 92-amino-acid chain: Small ribosomal subunit protein uS19 (92 aa).

Belongs to the universal ribosomal protein uS19 family.

In terms of biological role, protein S19 forms a complex with S13 that binds strongly to the 16S ribosomal RNA. This is Small ribosomal subunit protein uS19 from Variovorax paradoxus (strain S110).